The primary structure comprises 270 residues: Diaminopimelate epimerase (270 aa).

Substrate-binding residues include N15, Q49, and N66. Residue C75 is the Proton donor of the active site. Substrate is bound by residues 76–77, N155, N187, and 204–205; these read GN and ER. The Proton acceptor role is filled by C213. 214-215 contributes to the substrate binding site; the sequence is GS.

The protein belongs to the diaminopimelate epimerase family. In terms of assembly, homodimer.

It is found in the cytoplasm. It carries out the reaction (2S,6S)-2,6-diaminopimelate = meso-2,6-diaminopimelate. The protein operates within amino-acid biosynthesis; L-lysine biosynthesis via DAP pathway; DL-2,6-diaminopimelate from LL-2,6-diaminopimelate: step 1/1. Functionally, catalyzes the stereoinversion of LL-2,6-diaminopimelate (L,L-DAP) to meso-diaminopimelate (meso-DAP), a precursor of L-lysine and an essential component of the bacterial peptidoglycan. This Rickettsia africae (strain ESF-5) protein is Diaminopimelate epimerase.